A 200-amino-acid chain; its full sequence is Holliday junction branch migration complex subunit RuvA (200 aa).

A domain I region spans residues Met1–His64. The segment at Asn65–Pro143 is domain II. A disordered region spans residues Ser133–Gln152. Positions Glu144–Ser148 are flexible linker. Residues Ser149 to Thr200 form a domain III region.

This sequence belongs to the RuvA family. Homotetramer. Forms an RuvA(8)-RuvB(12)-Holliday junction (HJ) complex. HJ DNA is sandwiched between 2 RuvA tetramers; dsDNA enters through RuvA and exits via RuvB. An RuvB hexamer assembles on each DNA strand where it exits the tetramer. Each RuvB hexamer is contacted by two RuvA subunits (via domain III) on 2 adjacent RuvB subunits; this complex drives branch migration. In the full resolvosome a probable DNA-RuvA(4)-RuvB(12)-RuvC(2) complex forms which resolves the HJ.

The protein resides in the cytoplasm. Its function is as follows. The RuvA-RuvB-RuvC complex processes Holliday junction (HJ) DNA during genetic recombination and DNA repair, while the RuvA-RuvB complex plays an important role in the rescue of blocked DNA replication forks via replication fork reversal (RFR). RuvA specifically binds to HJ cruciform DNA, conferring on it an open structure. The RuvB hexamer acts as an ATP-dependent pump, pulling dsDNA into and through the RuvAB complex. HJ branch migration allows RuvC to scan DNA until it finds its consensus sequence, where it cleaves and resolves the cruciform DNA. This chain is Holliday junction branch migration complex subunit RuvA, found in Coxiella burnetii (strain Dugway 5J108-111).